The sequence spans 254 residues: Splicing factor tls1 (254 aa).

Residues 69 to 83 (KEKQLNTANEPHEAN) are compositionally biased toward basic and acidic residues. Disordered regions lie at residues 69–90 (KEKQ…SAQS) and 195–216 (RKRQ…LRTS). The span at 195 to 204 (RKRQKKRARM) shows a compositional bias: basic residues. Positions 205-216 (KEKLDSKALRTS) are enriched in basic and acidic residues.

It belongs to the TLS1 family. In terms of assembly, component of the spliceosome. Interacts with brr2.

The protein localises to the cytoplasm. The protein resides in the nucleus. Plays a role in pre-mRNA splicing by facilitating excision of introns featuring long spacing between the branchpoint and 3'-splice site. Assists the splicing of several components involved in chromatin organization, such as several shelterin complex subunits. This is Splicing factor tls1 from Schizosaccharomyces pombe (strain 972 / ATCC 24843) (Fission yeast).